Consider the following 175-residue polypeptide: Co-chaperone protein HscB homolog (175 aa).

In terms of domain architecture, J spans 7–79; it reads SHFALFNLPE…LKRARYLLSL (73 aa).

It belongs to the HscB family. Interacts with HscA and stimulates its ATPase activity.

In terms of biological role, co-chaperone involved in the maturation of iron-sulfur cluster-containing proteins. Seems to help targeting proteins to be folded toward HscA. The polypeptide is Co-chaperone protein HscB homolog (Paraburkholderia phymatum (strain DSM 17167 / CIP 108236 / LMG 21445 / STM815) (Burkholderia phymatum)).